A 579-amino-acid polypeptide reads, in one-letter code: ATP-dependent lipid A-core flippase (579 aa).

4 helical membrane passes run 24-44, 61-81, 147-167, and 253-273; these read FLAAVVGYAIYAASSTALAEM, LMLPLFVIGMFAARGVGTFLG, LFVIGLVSYLLWTNWMLTLIF, and LLVALSLAGLVWLAMSPALMA. Residues 25 to 306 form the ABC transmembrane type-1 domain; that stretch reads LAAVVGYAIY…LTEVNSTIQK (282 aa). Positions 338-573 constitute an ABC transporter domain; sequence VRFEGVRFRY…DGAYAALHQL (236 aa). 372-379 is an ATP binding site; sequence GRSGSGKS.

It belongs to the ABC transporter superfamily. Lipid exporter (TC 3.A.1.106) family. In terms of assembly, homodimer.

Its subcellular location is the cell inner membrane. It catalyses the reaction ATP + H2O + lipid A-core oligosaccharideSide 1 = ADP + phosphate + lipid A-core oligosaccharideSide 2.. In terms of biological role, involved in lipopolysaccharide (LPS) biosynthesis. Translocates lipid A-core from the inner to the outer leaflet of the inner membrane. Transmembrane domains (TMD) form a pore in the inner membrane and the ATP-binding domain (NBD) is responsible for energy generation. The polypeptide is ATP-dependent lipid A-core flippase (Chromohalobacter salexigens (strain ATCC BAA-138 / DSM 3043 / CIP 106854 / NCIMB 13768 / 1H11)).